The primary structure comprises 179 residues: SCAN domain-containing protein 1 (179 aa).

The interval 1 to 108 (MAATEPILAA…GSRLGPETFR (108 aa)) is disordered. Residues 60–80 (AIPTPQAAASAAPELPLGPAP) are compositionally biased toward low complexity. Positions 108-166 (RQRFRQFRYQDAAGPREAFRQLRELSRQWLRPDIRTKEQIVEMLVQEQLLAILPEAARA) constitute an SCAN box domain.

As to quaternary structure, interacts with ZNF202.

Its subcellular location is the nucleus. Functionally, may regulate transcriptional activity. The polypeptide is SCAN domain-containing protein 1 (SCAND1) (Pongo pygmaeus (Bornean orangutan)).